The sequence spans 518 residues: Bifunctional purine biosynthesis protein PurH (518 aa).

Positions 1–144 (MSKRALISVS…KNHAAVTVVC (144 aa)) constitute an MGS-like domain.

This sequence belongs to the PurH family.

The enzyme catalyses (6R)-10-formyltetrahydrofolate + 5-amino-1-(5-phospho-beta-D-ribosyl)imidazole-4-carboxamide = 5-formamido-1-(5-phospho-D-ribosyl)imidazole-4-carboxamide + (6S)-5,6,7,8-tetrahydrofolate. It catalyses the reaction IMP + H2O = 5-formamido-1-(5-phospho-D-ribosyl)imidazole-4-carboxamide. It participates in purine metabolism; IMP biosynthesis via de novo pathway; 5-formamido-1-(5-phospho-D-ribosyl)imidazole-4-carboxamide from 5-amino-1-(5-phospho-D-ribosyl)imidazole-4-carboxamide (10-formyl THF route): step 1/1. It functions in the pathway purine metabolism; IMP biosynthesis via de novo pathway; IMP from 5-formamido-1-(5-phospho-D-ribosyl)imidazole-4-carboxamide: step 1/1. The sequence is that of Bifunctional purine biosynthesis protein PurH from Lactococcus lactis subsp. cremoris (strain MG1363).